Here is a 355-residue protein sequence, read N- to C-terminus: Methylthioribose-1-phosphate isomerase (355 aa).

Residues 50–52 (RGA), arginine 93, and glutamine 198 each bind substrate. The active-site Proton donor is the aspartate 239. Residue 249-250 (NK) coordinates substrate.

It belongs to the eIF-2B alpha/beta/delta subunits family. MtnA subfamily. Homodimer.

It carries out the reaction 5-(methylsulfanyl)-alpha-D-ribose 1-phosphate = 5-(methylsulfanyl)-D-ribulose 1-phosphate. It functions in the pathway amino-acid biosynthesis; L-methionine biosynthesis via salvage pathway; L-methionine from S-methyl-5-thio-alpha-D-ribose 1-phosphate: step 1/6. Catalyzes the interconversion of methylthioribose-1-phosphate (MTR-1-P) into methylthioribulose-1-phosphate (MTRu-1-P). The sequence is that of Methylthioribose-1-phosphate isomerase from Geobacillus thermodenitrificans (strain NG80-2).